We begin with the raw amino-acid sequence, 472 residues long: Argininosuccinate lyase (472 aa).

It belongs to the lyase 1 family. Argininosuccinate lyase subfamily.

The protein resides in the cytoplasm. The catalysed reaction is 2-(N(omega)-L-arginino)succinate = fumarate + L-arginine. It functions in the pathway amino-acid biosynthesis; L-arginine biosynthesis; L-arginine from L-ornithine and carbamoyl phosphate: step 3/3. This chain is Argininosuccinate lyase, found in Rhodococcus jostii (strain RHA1).